The sequence spans 250 residues: NADH-quinone oxidoreductase subunit C (250 aa).

It belongs to the complex I 30 kDa subunit family. As to quaternary structure, NDH-1 is composed of 14 different subunits. Subunits NuoB, C, D, E, F, and G constitute the peripheral sector of the complex.

It is found in the cell inner membrane. It carries out the reaction a quinone + NADH + 5 H(+)(in) = a quinol + NAD(+) + 4 H(+)(out). In terms of biological role, NDH-1 shuttles electrons from NADH, via FMN and iron-sulfur (Fe-S) centers, to quinones in the respiratory chain. The immediate electron acceptor for the enzyme in this species is believed to be ubiquinone. Couples the redox reaction to proton translocation (for every two electrons transferred, four hydrogen ions are translocated across the cytoplasmic membrane), and thus conserves the redox energy in a proton gradient. The polypeptide is NADH-quinone oxidoreductase subunit C (Xanthomonas oryzae pv. oryzae (strain PXO99A)).